A 261-amino-acid polypeptide reads, in one-letter code: Global transcriptional regulator CodY (261 aa).

Positions 1-159 (MANLLDKTRK…ASTVVGLQLL (159 aa)) are GAF domain. Positions 207-226 (ASVIADRIGITRSVIVNALR) form a DNA-binding region, H-T-H motif.

This sequence belongs to the CodY family.

It is found in the cytoplasm. Functionally, DNA-binding global transcriptional regulator which is involved in the adaptive response to starvation and acts by directly or indirectly controlling the expression of numerous genes in response to nutrient availability. During rapid exponential growth, CodY is highly active and represses genes whose products allow adaptation to nutrient depletion. This Streptococcus thermophilus (strain CNRZ 1066) protein is Global transcriptional regulator CodY.